The chain runs to 301 residues: Protein FAM221A (301 aa).

The segment at 235–271 (MHAPSTSSPQPLAGGNEVGPSTQLSSLRKPEEDDMAY) is disordered.

It belongs to the FAM221 family.

This chain is Protein FAM221A (Fam221a), found in Mus musculus (Mouse).